Consider the following 633-residue polypeptide: GTPase-GDP dissociation stimulator BEM4 (633 aa).

As to quaternary structure, interacts with CDC42; the interaction is direct. Interacts with RHO1; the interaction is direct. Interacts with RHO2. Interacts with RHO4. Interacts with CDC11.

The protein resides in the nucleus. The protein localises to the cytoplasm. Probably acts as a GEF (guanine nucleotide exchange factor) for the Rho family of small GTP-binding proteins (G proteins) that stimulates the dissociation of GDP to enable subsequent binding of GTP. May also chaperone the processing and/or trafficking of small GTPases independently of GEF activity. Involved in the control of polarized cell growth via CDC42-mediated signaling. Involved in the control of cell-wall organization via RHO1-mediated signaling. May also function via RHO2 and RHO4. The sequence is that of GTPase-GDP dissociation stimulator BEM4 from Saccharomyces cerevisiae (strain ATCC 204508 / S288c) (Baker's yeast).